A 227-amino-acid polypeptide reads, in one-letter code: tRNA (guanine-N(1)-)-methyltransferase (227 aa).

Residues G111 and 135–140 (LGDYVL) contribute to the S-adenosyl-L-methionine site.

Belongs to the RNA methyltransferase TrmD family. As to quaternary structure, homodimer.

It localises to the cytoplasm. The enzyme catalyses guanosine(37) in tRNA + S-adenosyl-L-methionine = N(1)-methylguanosine(37) in tRNA + S-adenosyl-L-homocysteine + H(+). Functionally, specifically methylates guanosine-37 in various tRNAs. In Leifsonia xyli subsp. xyli (strain CTCB07), this protein is tRNA (guanine-N(1)-)-methyltransferase.